We begin with the raw amino-acid sequence, 473 residues long: Mitochondrial distribution and morphology protein 10 (473 aa).

It belongs to the MDM10 family. In terms of assembly, component of the ER-mitochondria encounter structure (ERMES) or MDM complex, composed of MMM1, MDM10, MDM12 and MDM34. Associates with the mitochondrial outer membrane sorting assembly machinery SAM(core) complex.

It localises to the mitochondrion outer membrane. Its function is as follows. Component of the ERMES/MDM complex, which serves as a molecular tether to connect the endoplasmic reticulum and mitochondria. Components of this complex are involved in the control of mitochondrial shape and protein biogenesis and may function in phospholipid exchange. MDM10 is involved in the late assembly steps of the general translocase of the mitochondrial outer membrane (TOM complex). Functions in the TOM40-specific route of the assembly of outer membrane beta-barrel proteins, including the association of TOM40 with the receptor TOM22 and small TOM proteins. Can associate with the SAM(core) complex as well as the MDM12-MMM1 complex, both involved in late steps of the major beta-barrel assembly pathway, that is responsible for biogenesis of all outer membrane beta-barrel proteins. May act as a switch that shuttles between both complexes and channels precursor proteins into the TOM40-specific pathway. Plays a role in mitochondrial morphology and in the inheritance of mitochondria. The polypeptide is Mitochondrial distribution and morphology protein 10 (Candida albicans (strain SC5314 / ATCC MYA-2876) (Yeast)).